A 297-amino-acid polypeptide reads, in one-letter code: MPLPADPSPTLSAYAHPERLVTADWLSAHMGAPGLAIVESDEDVLLYDVGHIPGAVKIDWHTDLNDPRVRDYINGEQFAELMDRKGIARDDTVVIYGDKSNWWAAYALWVFTLFGHADVRLLNGGRDLWLAERRETTLDVPTKTCTGYPVVQRNDAPIRAFRDDVLAILGAQPLIDVRSPEEYTGKRTHMPDYPEEGALRAGHIPTAVHIPWGKAADESGRFRSREELERLYDFINPDDQTVVYCRIGERSSHTWFVLTHLLGKADVRNYDGSWTEWGNAVRVPIVAGEEPGVVPVV.

Rhodanese domains are found at residues 31–138 and 168–286; these read GAPG…ETTL and ILGA…VPIV. Cysteine 245 functions as the Cysteine persulfide intermediate in the catalytic mechanism. Arginine 250 provides a ligand contact to substrate.

It catalyses the reaction thiosulfate + hydrogen cyanide = thiocyanate + sulfite + 2 H(+). This is Putative thiosulfate sulfurtransferase SseA (sseA) from Mycobacterium tuberculosis (strain CDC 1551 / Oshkosh).